The following is a 473-amino-acid chain: Trigger factor (473 aa).

The region spanning G171–A256 is the PPIase FKBP-type domain. The disordered stretch occupies residues K439–D473. A compositionally biased stretch (basic and acidic residues) spans P456 to D473.

Belongs to the FKBP-type PPIase family. Tig subfamily.

The protein resides in the cytoplasm. It carries out the reaction [protein]-peptidylproline (omega=180) = [protein]-peptidylproline (omega=0). Involved in protein export. Acts as a chaperone by maintaining the newly synthesized protein in an open conformation. Functions as a peptidyl-prolyl cis-trans isomerase. This is Trigger factor from Methylobacterium radiotolerans (strain ATCC 27329 / DSM 1819 / JCM 2831 / NBRC 15690 / NCIMB 10815 / 0-1).